The primary structure comprises 528 residues: Phenylalanine--tRNA ligase alpha subunit (528 aa).

Positions 365 and 444 each coordinate L-phenylalanine. Glu446 provides a ligand contact to Mg(2+). Phe469 lines the L-phenylalanine pocket.

The protein belongs to the class-II aminoacyl-tRNA synthetase family. Phe-tRNA synthetase alpha subunit type 2 subfamily. In terms of assembly, tetramer of two alpha and two beta subunits. The cofactor is Mg(2+).

Its subcellular location is the cytoplasm. It carries out the reaction tRNA(Phe) + L-phenylalanine + ATP = L-phenylalanyl-tRNA(Phe) + AMP + diphosphate + H(+). This is Phenylalanine--tRNA ligase alpha subunit from Borreliella burgdorferi (strain ATCC 35210 / DSM 4680 / CIP 102532 / B31) (Borrelia burgdorferi).